The sequence spans 127 residues: Mating pheromone 4 (127 aa).

The N-terminal stretch at 1–16 (MKAIFIILAILMVTQA) is a signal peptide. The propeptide occupies 17–42 (FKMTSKVKSMNMSRNMSKNTSTLGTK).

The protein localises to the secreted. Mating ciliate pheromones (or gamones) are diffusible extracellular communication signals that distinguish different intraspecific classes of cells commonly referred to as 'mating types'. They prepare the latter for conjugation by changing their cell surface properties. The sequence is that of Mating pheromone 4 (PHR4) from Euplotoides octocarinatus (Freshwater ciliate).